A 341-amino-acid chain; its full sequence is Heterogeneous nuclear ribonucleoproteins A2/B1 (341 aa).

RRM domains follow at residues 9–92 (RKLF…ESGK) and 100–179 (KKLF…LSRQ). A Glycyl lysine isopeptide (Lys-Gly) (interchain with G-Cter in SUMO2) cross-link involves residue lysine 10. Serine 17 is subject to Phosphoserine. Arginine 26 is modified (omega-N-methylarginine). Serine 73 bears the Phosphoserine mark. Lysine 92 is subject to N6,N6-dimethyllysine; alternate. Residue lysine 92 forms a Glycyl lysine isopeptide (Lys-Gly) (interchain with G-Cter in SUMO2); alternate linkage. Glycyl lysine isopeptide (Lys-Gly) (interchain with G-Cter in SUMO2) cross-links involve residues lysine 100, lysine 108, and lysine 125. Threonine 128 carries the phosphothreonine modification. Phosphoserine is present on serine 137. Lysine 140 is covalently cross-linked (Glycyl lysine isopeptide (Lys-Gly) (interchain with G-Cter in SUMO2)). The residue at position 147 (threonine 147) is a Phosphothreonine. Residues lysine 156 and lysine 161 each participate in a glycyl lysine isopeptide (Lys-Gly) (interchain with G-Cter in SUMO2); alternate cross-link. Residues lysine 156 and lysine 161 each carry the N6-acetyllysine; alternate modification. Phosphothreonine is present on threonine 164. Lysine 174 participates in a covalent cross-link: Glycyl lysine isopeptide (Lys-Gly) (interchain with G-Cter in SUMO2). Residues serine 177 and serine 189 each carry the phosphoserine modification. The interval 181-341 (MQEVQSSRSG…SGGYGGRSRY (161 aa)) is disordered. Gly residues predominate over residues 190-211 (GRGGNFGFGDSRGGGGNFGPGP). Arginine 191 is modified (asymmetric dimethylarginine; alternate). Arginine 191 carries the dimethylated arginine; alternate modification. Arginine 191 is subject to Omega-N-methylarginine; alternate. Serine 200 is modified (phosphoserine). The residue at position 201 (arginine 201) is an Asymmetric dimethylarginine; alternate. Arginine 201 carries the dimethylated arginine; alternate modification. Position 201 is an omega-N-methylarginine; alternate (arginine 201). Phosphoserine is present on serine 213. Position 216 is an omega-N-methylarginine (arginine 216). Phosphoserine occurs at positions 219 and 224. An Omega-N-methylarginine modification is found at arginine 226. At serine 247 the chain carries Phosphoserine. Arginine 254 carries the post-translational modification Asymmetric dimethylarginine; alternate. Omega-N-methylarginine; alternate is present on arginine 254. The interval 296 to 335 (QQPSNYGPMKSGNFGGSRNMGGPYGGGNYGPGGSGGSGGY) is nuclear targeting sequence. Residues 308 to 341 (NFGGSRNMGGPYGGGNYGPGGSGGSGGYGGRSRY) are compositionally biased toward gly residues. Residue serine 312 is modified to Phosphoserine. Arginine 313 carries the omega-N-methylarginine modification. A Phosphotyrosine modification is found at tyrosine 319. A phosphoserine mark is found at serine 329 and serine 332. Tyrosine 335 is modified (phosphotyrosine). An Omega-N-methylarginine modification is found at arginine 338.

Identified in the spliceosome C complex. Identified in a IGF2BP1-dependent mRNP granule complex containing untranslated mRNAs. Interacts with IGF2BP1. Interacts with C9orf72. Interacts with DGCR8. Interacts with TARDBP. Interacts with CKAP5. Interacts with PPIA/CYPA. Interacts (via C-terminus) with FAM76B; the interaction results in retention of HNRNPA2B1 in the nucleus and inhibition of the NF-kappa-B-mediated inflammatory pathway. Interacts with NF-kappa-B inhibitors NFKBIA and NFKBIE; the interaction may be mediated by the RRM2 domain of HNRNPA2B1, and HNRNPA2B1 may interact simultaneously with FAM76B and either NFKBIA or NFKBIE to form a complex. Post-translationally, sumoylated in exosomes, promoting miRNAs-binding. Asymmetric dimethylation at Arg-254 constitutes the major methylation site. According to a report, methylation affects subcellular location and promotes nuclear localization. According to another report, methylation at Arg-254 does not influence nucleocytoplasmic shuttling.

The protein localises to the nucleus. The protein resides in the nucleoplasm. Its subcellular location is the cytoplasmic granule. It localises to the secreted. It is found in the extracellular exosome. Functionally, heterogeneous nuclear ribonucleoprotein (hnRNP) that associates with nascent pre-mRNAs, packaging them into hnRNP particles. The hnRNP particle arrangement on nascent hnRNA is non-random and sequence-dependent and serves to condense and stabilize the transcripts and minimize tangling and knotting. Packaging plays a role in various processes such as transcription, pre-mRNA processing, RNA nuclear export, subcellular location, mRNA translation and stability of mature mRNAs. Forms hnRNP particles with at least 20 other different hnRNP and heterogeneous nuclear RNA in the nucleus. Involved in transport of specific mRNAs to the cytoplasm in oligodendrocytes and neurons: acts by specifically recognizing and binding the A2RE (21 nucleotide hnRNP A2 response element) or the A2RE11 (derivative 11 nucleotide oligonucleotide) sequence motifs present on some mRNAs, and promotes their transport to the cytoplasm. Specifically binds single-stranded telomeric DNA sequences, protecting telomeric DNA repeat against endonuclease digestion. Also binds other RNA molecules, such as primary miRNA (pri-miRNAs): acts as a nuclear 'reader' of the N6-methyladenosine (m6A) mark by specifically recognizing and binding a subset of nuclear m6A-containing pri-miRNAs. Binding to m6A-containing pri-miRNAs promotes pri-miRNA processing by enhancing binding of DGCR8 to pri-miRNA transcripts. Involved in miRNA sorting into exosomes following sumoylation, possibly by binding (m6A)-containing pre-miRNAs. Acts as a regulator of efficiency of mRNA splicing, possibly by binding to m6A-containing pre-mRNAs. Plays a role in the splicing of pyruvate kinase PKM by binding repressively to sequences flanking PKM exon 9, inhibiting exon 9 inclusion and resulting in exon 10 inclusion and production of the PKM M2 isoform. This Bos taurus (Bovine) protein is Heterogeneous nuclear ribonucleoproteins A2/B1 (HNRNPA2B1).